The chain runs to 842 residues: ATP-binding cassette sub-family B member 6 (842 aa).

At 1-26 (MVTVGNYCETEGPAGPAWTQNGLSPC) the chain is on the lumenal side. Residues 1–205 (MVTVGNYCET…SGGLFILGLW (205 aa)) form a required for the lysosomal targeting region. A required for ATPase activity region spans residues 1-236 (MVTVGNYCET…GNQGRSTDRR (236 aa)). An intrachain disulfide couples cysteine 8 to cysteine 26. The chain crosses the membrane as a helical span at residues 27-47 (FFFTLVPSTLLTLGVLALVLV). The Cytoplasmic portion of the chain corresponds to 48 to 72 (LPRRRREVPAGPEELSWAAGPRVAP). The chain crosses the membrane as a helical span at residues 73–93 (YVLQLFLATLQMALPLAGLAG). The Lumenal portion of the chain corresponds to 94–106 (RVGTARGVRLPGY). Residues 107–127 (LLLASVLESLASVCGLWLLVV) traverse the membrane as a helical segment. Over 128–147 (ERSQARQSLAMGVWMKFRHS) the chain is Cytoplasmic. A helical transmembrane segment spans residues 148 to 168 (LGLLLLWTVTFAAENLALVSW). The Lumenal segment spans residues 169-185 (NSPQWWWARADLGQQVQ). A helical membrane pass occupies residues 186–206 (FGLWVLRYVTSGGLFILGLWA). Topologically, residues 207–263 (PGLRPQSYTLHVHEEDQDVGGNQGRSTDRRSTWRDLGRKLRLLSSYLWPRGSPSLQL) are cytoplasmic. The chain crosses the membrane as a helical span at residues 264-284 (IVLICLGLMGLERALNVLVPI). One can recognise an ABC transmembrane type-1 domain in the interval 265–556 (VLICLGLMGL…FGTYYRMIQT (292 aa)). At 285–291 (FYRDIVN) the chain is on the lumenal side. Residues 292–312 (LLTAKAPWSSLAWTVTTYVFL) traverse the membrane as a helical segment. The Cytoplasmic segment spans residues 313-375 (KFLQGGGTGS…TGEVLRIVDR (63 aa)). The chain crosses the membrane as a helical span at residues 376–396 (GTSSVTGLLSYLVFSIIPTLA). Aspartate 397 is a topological domain (lumenal). The helical transmembrane segment at 398–418 (IIIGIIYFSMFFNAWFGLIVF) threads the bilayer. Topologically, residues 419 to 499 (LCMSLYLILT…STASLVVLNQ (81 aa)) are cytoplasmic. The chain crosses the membrane as a helical span at residues 500–520 (TQNLVIGLGLLAGSLLCAYFV). The Lumenal portion of the chain corresponds to 521–529 (SEQKLQVGD). Residues 530–550 (FVLFGTYITQLYMPLNWFGTY) form a helical membrane-spanning segment. Topologically, residues 551-842 (YRMIQTNFID…PEESKPQDTA (292 aa)) are cytoplasmic. The 235-residue stretch at 590-824 (IEFENVHFSY…GGVYAEMWQL (235 aa)) folds into the ABC transporter domain. Residues tyrosine 599 and 623 to 634 (GPSGAGKSTILR) contribute to the ATP site.

It belongs to the ABC transporter superfamily. ABCB family. Heavy Metal importer (TC 3.A.1.210) subfamily. As to quaternary structure, homodimer. Post-translationally, N-glycosylated.

It is found in the cell membrane. The protein resides in the mitochondrion outer membrane. Its subcellular location is the endoplasmic reticulum membrane. The protein localises to the golgi apparatus membrane. It localises to the endosome membrane. It is found in the lysosome membrane. The protein resides in the late endosome membrane. Its subcellular location is the early endosome membrane. The protein localises to the secreted. It localises to the extracellular exosome. It is found in the mitochondrion. The protein resides in the endosome. Its subcellular location is the multivesicular body membrane. The protein localises to the melanosome membrane. It carries out the reaction coproporphyrin III(in) + ATP + H2O = coproporphyrin III(out) + ADP + phosphate + H(+). The catalysed reaction is coproporphyrinogen III(in) + ATP + H2O = coproporphyrinogen III(out) + ADP + phosphate + H(+). The enzyme catalyses heme b(in) + ATP + H2O = heme b(out) + ADP + phosphate + H(+). It catalyses the reaction pheophorbide a(in) + ATP + H2O = pheophorbide a(out) + ADP + phosphate + H(+). It carries out the reaction protoporphyrin IX(in) + ATP + H2O = protoporphyrin IX(out) + ADP + phosphate + H(+). The catalysed reaction is coproporphyrin I(in) + ATP + H2O = coproporphyrin I(out) + ADP + phosphate + H(+). The enzyme catalyses uroporphyrin I(in) + ATP + H2O = uroporphyrin I(out) + ADP + phosphate + H(+). It catalyses the reaction uroporphyrin III(in) + ATP + H2O = uroporphyrin III(out) + ADP + phosphate + H(+). In terms of biological role, ATP-dependent transporter that catalyzes the transport of a broad-spectrum of porphyrins from the cytoplasm to the extracellular space through the plasma membrane or into the vesicle lumen. May also function as an ATP-dependent importer of porphyrins from the cytoplasm into the mitochondria, in turn may participate in the de novo heme biosynthesis regulation and in the coordination of heme and iron homeostasis during phenylhydrazine stress. May play a key role in the early steps of melanogenesis producing PMEL amyloid fibrils. In vitro, it confers to cells a resistance to toxic metal such as arsenic and cadmium and against chemotherapeutics agent such as 5-fluorouracil, SN-38 and vincristin. In addition may play a role in the transition metal homeostasis. The sequence is that of ATP-binding cassette sub-family B member 6 from Mus musculus (Mouse).